Here is a 527-residue protein sequence, read N- to C-terminus: Splicing factor MUD2 (527 aa).

Residues 36–169 (DNAVIDTHFK…SKFNGDRDKR (134 aa)) form a disordered region. Positions 42–55 (THFKRQKSDGELPK) are enriched in basic and acidic residues. Serine 49 is modified (phosphoserine). Residues 60–85 (RNVSHSNNRGPSSIITMSTNRTTYEQ) are compositionally biased toward polar residues. The span at 94 to 109 (SYRDASGRSYNRENRY) shows a compositional bias: basic and acidic residues. The segment covering 110–122 (SSHNTGPQWNNNP) has biased composition (polar residues). Basic and acidic residues-rich tracts occupy residues 125–141 (RQRD…DRRG) and 155–169 (RKNE…RDKR). Positions 424–511 (LLLLNCLDPL…QFNDRTVLCT (88 aa)) constitute an RRM domain.

In terms of assembly, MSL5, MUD2 and PRP40 interact to form the commitment complex 2 (CC2), a precursor of mature spliceosomes.

Splicing factor that contacts pre-mRNA directly and is a component of the pre-mRNA-U1 snRNP complex (commitment complex 2) that forms during early spliceosome assembly in yeast extracts. In Saccharomyces cerevisiae (strain ATCC 204508 / S288c) (Baker's yeast), this protein is Splicing factor MUD2 (MUD2).